A 727-amino-acid polypeptide reads, in one-letter code: Pentatricopeptide repeat-containing protein At2g33680 (727 aa).

PPR repeat units lie at residues 13-47 (HTST…GAST), 48-78 (CIQH…IICK), 79-116 (DVVS…DILP), 117-150 (NAYT…MSSF), 152-182 (DIYV…MPER), 183-213 (NTYT…FLRE), 220-254 (SDYV…GLLG), 255-285 (FVAL…SGDR), 286-320 (NSIT…GIKP), 321-355 (SEYT…GFER), 356-386 (HLFA…LQER), 387-421 (DVAL…GIIP), 422-456 (NDPT…GFGL), 457-487 (EVPI…TPNK), 488-522 (DVVS…GMEP), 523-553 (DDVT…MSDQ), and 559-593 (KVDH…HGLC). Residues 594–669 (LWRILLSACK…EVGCSWIELK (76 aa)) are type E motif. The segment at 670–700 (NQYHVFVVGDTMHPMIEETKDLVCLVSRQMI) is type E(+) motif.

It belongs to the PPR family. PCMP-E subfamily.

The protein is Pentatricopeptide repeat-containing protein At2g33680 (PCMP-E19) of Arabidopsis thaliana (Mouse-ear cress).